The sequence spans 387 residues: Protein kinase ORF16 (387 aa).

The Protein kinase domain occupies Lys82–Leu381. Lys122 provides a ligand contact to ATP. The active-site Proton acceptor is the Asp226.

This sequence belongs to the protein kinase superfamily. Ser/Thr protein kinase family.

The enzyme catalyses L-seryl-[protein] + ATP = O-phospho-L-seryl-[protein] + ADP + H(+). The catalysed reaction is L-threonyl-[protein] + ATP = O-phospho-L-threonyl-[protein] + ADP + H(+). This Ictalurid herpesvirus 1 (strain Auburn) (IcHV-1) protein is Protein kinase ORF16 (ORF16).